Here is an 87-residue protein sequence, read N- to C-terminus: UPF0235 protein TGRD_618 (87 aa).

It belongs to the UPF0235 family.

This is UPF0235 protein TGRD_618 from Endomicrobium trichonymphae.